We begin with the raw amino-acid sequence, 303 residues long: Aspartate carbamoyltransferase catalytic subunit (303 aa).

2 residues coordinate carbamoyl phosphate: arginine 51 and threonine 52. Residue lysine 80 participates in L-aspartate binding. Carbamoyl phosphate-binding residues include arginine 101, histidine 129, and glutamine 132. Residues arginine 162 and arginine 221 each coordinate L-aspartate. Residues leucine 260 and proline 261 each contribute to the carbamoyl phosphate site.

It belongs to the aspartate/ornithine carbamoyltransferase superfamily. ATCase family. Heterooligomer of catalytic and regulatory chains.

The enzyme catalyses carbamoyl phosphate + L-aspartate = N-carbamoyl-L-aspartate + phosphate + H(+). It participates in pyrimidine metabolism; UMP biosynthesis via de novo pathway; (S)-dihydroorotate from bicarbonate: step 2/3. Its function is as follows. Catalyzes the condensation of carbamoyl phosphate and aspartate to form carbamoyl aspartate and inorganic phosphate, the committed step in the de novo pyrimidine nucleotide biosynthesis pathway. The sequence is that of Aspartate carbamoyltransferase catalytic subunit from Saccharolobus solfataricus (strain ATCC 35092 / DSM 1617 / JCM 11322 / P2) (Sulfolobus solfataricus).